Reading from the N-terminus, the 135-residue chain is 2-iminobutanoate/2-iminopropanoate deaminase (135 aa).

At Ser-2 the chain carries N-acetylserine. N6-succinyllysine occurs at positions 13, 60, 67, and 134.

The protein belongs to the RutC family. As to quaternary structure, homotrimer. Interacts with YTHDF2. As to expression, expressed predominantly in liver and kidney. Lower levels in lung and brain.

The protein resides in the cytoplasm. The protein localises to the nucleus. It localises to the peroxisome. Its subcellular location is the mitochondrion. It carries out the reaction 2-iminobutanoate + H2O = 2-oxobutanoate + NH4(+). The enzyme catalyses 2-iminopropanoate + H2O = pyruvate + NH4(+). Functionally, catalyzes the hydrolytic deamination of enamine/imine intermediates that form during the course of normal metabolism. May facilitate the release of ammonia from these potentially toxic reactive metabolites, reducing their impact on cellular components. It may act on enamine/imine intermediates formed by several types of pyridoxal-5'-phosphate-dependent dehydratases including L-threonine dehydratase. In terms of biological role, also promotes endoribonucleolytic cleavage of some transcripts by promoting recruitment of the ribonuclease P/MRP complex. Acts by bridging YTHDF2 and the ribonuclease P/MRP complex. RIDA/HRSP12 binds to N6-methyladenosine (m6A)-containing mRNAs containing a 5'-GGUUC-3' motif: cooperative binding of RIDA/HRSP12 and YTHDF2 to such transcripts lead to recruitment of the ribonuclease P/MRP complex and subsequent endoribonucleolytic cleavage. This is 2-iminobutanoate/2-iminopropanoate deaminase from Mus musculus (Mouse).